A 563-amino-acid chain; its full sequence is BOS complex subunit NCLN (563 aa).

A signal peptide spans 1-42 (MLEEAGEVLENVLKASCLPLGFIVFLPAVLLLVAPPLPAADA). At 43-522 (AHEFTVYRMQ…VMNAYRVKPA (480 aa)) the chain is on the lumenal side. N-linked (GlcNAc...) asparagine glycans are attached at residues Asn-241 and Asn-428. A helical membrane pass occupies residues 523 to 543 (IFDLLLALCIGAYLGMAYTAV). Residues 544 to 563 (QHFHVLYKTVQRLLLKAKAQ) lie on the Cytoplasmic side of the membrane.

It belongs to the nicastrin family. Component of the back of Sec61 (BOS) complex, composed of NCLN/Nicalin, NOMO1 and TMEM147. The BOS complex is part of the multi-pass translocon (MPT) complex, composed of three subcomplexes, the GEL complex (composed of RAB5IF/OPTI and TMCO1), the BOS complex (composed of NCLN/Nicalin, NOMO1 and TMEM147) and the PAT complex (composed of WDR83OS/Asterix and CCDC47). The MPT complex associates with the SEC61 complex.

The protein localises to the endoplasmic reticulum membrane. Component of the multi-pass translocon (MPT) complex that mediates insertion of multi-pass membrane proteins into the lipid bilayer of membranes. The MPT complex takes over after the SEC61 complex: following membrane insertion of the first few transmembrane segments of proteins by the SEC61 complex, the MPT complex occludes the lateral gate of the SEC61 complex to promote insertion of subsequent transmembrane regions. May antagonize Nodal signaling and subsequent organization of axial structures during mesodermal patterning, via its interaction with NOMO. This chain is BOS complex subunit NCLN (Ncln), found in Mus musculus (Mouse).